The sequence spans 360 residues: Tubulin-like protein CetZ2 (360 aa).

Residues glutamine 10 to lysine 14, glycine 65 to glycine 66, glycine 106 to glycine 108, glutamate 138, asparagine 165, and asparagine 183 contribute to the GTP site. A compositionally biased stretch (basic and acidic residues) spans glutamate 334 to aspartate 354. The disordered stretch occupies residues glutamate 334–leucine 360.

The protein belongs to the CetZ family.

It localises to the cytoplasm. In terms of biological role, involved in cell shape control. This chain is Tubulin-like protein CetZ2, found in Haloferax volcanii (strain ATCC 29605 / DSM 3757 / JCM 8879 / NBRC 14742 / NCIMB 2012 / VKM B-1768 / DS2) (Halobacterium volcanii).